The chain runs to 1075 residues: DNA-directed RNA polymerase subunit beta (1075 aa).

Belongs to the RNA polymerase beta chain family. In terms of assembly, in plastids the minimal PEP RNA polymerase catalytic core is composed of four subunits: alpha, beta, beta', and beta''. When a (nuclear-encoded) sigma factor is associated with the core the holoenzyme is formed, which can initiate transcription.

Its subcellular location is the plastid. It is found in the chloroplast. The enzyme catalyses RNA(n) + a ribonucleoside 5'-triphosphate = RNA(n+1) + diphosphate. Its function is as follows. DNA-dependent RNA polymerase catalyzes the transcription of DNA into RNA using the four ribonucleoside triphosphates as substrates. The polypeptide is DNA-directed RNA polymerase subunit beta (Saccharum officinarum (Sugarcane)).